The chain runs to 77 residues: Acyl carrier protein (77 aa).

In terms of domain architecture, Carrier spans Ser-2–Thr-77. Ser-37 is subject to O-(pantetheine 4'-phosphoryl)serine.

It belongs to the acyl carrier protein (ACP) family. In terms of processing, 4'-phosphopantetheine is transferred from CoA to a specific serine of apo-ACP by AcpS. This modification is essential for activity because fatty acids are bound in thioester linkage to the sulfhydryl of the prosthetic group.

It is found in the cytoplasm. Its pathway is lipid metabolism; fatty acid biosynthesis. In terms of biological role, carrier of the growing fatty acid chain in fatty acid biosynthesis. The chain is Acyl carrier protein from Geobacter metallireducens (strain ATCC 53774 / DSM 7210 / GS-15).